Reading from the N-terminus, the 199-residue chain is GTP cyclohydrolase-2 (199 aa).

52 to 56 lines the GTP pocket; that stretch reads RMHSE. Residues cysteine 57, cysteine 68, and cysteine 70 each contribute to the Zn(2+) site. GTP-binding positions include glutamine 73, 94 to 96, and threonine 116; that span reads EGR. Aspartate 128 functions as the Proton acceptor in the catalytic mechanism. The active-site Nucleophile is the arginine 130. Threonine 151 and lysine 156 together coordinate GTP.

Belongs to the GTP cyclohydrolase II family. It depends on Zn(2+) as a cofactor.

It carries out the reaction GTP + 4 H2O = 2,5-diamino-6-hydroxy-4-(5-phosphoribosylamino)-pyrimidine + formate + 2 phosphate + 3 H(+). The protein operates within cofactor biosynthesis; riboflavin biosynthesis; 5-amino-6-(D-ribitylamino)uracil from GTP: step 1/4. Functionally, catalyzes the conversion of GTP to 2,5-diamino-6-ribosylamino-4(3H)-pyrimidinone 5'-phosphate (DARP), formate and pyrophosphate. This Aliivibrio fischeri (strain ATCC 700601 / ES114) (Vibrio fischeri) protein is GTP cyclohydrolase-2.